The primary structure comprises 301 residues: Eukaryotic translation initiation factor 3 subunit F (301 aa).

One can recognise an MPN domain in the interval 32 to 169 (VHVHPVALFS…IKSYISSPLG (138 aa)).

It belongs to the eIF-3 subunit F family. As to quaternary structure, component of the eukaryotic translation initiation factor 3 (eIF-3) complex.

Its subcellular location is the cytoplasm. In terms of biological role, component of the eukaryotic translation initiation factor 3 (eIF-3) complex, which is involved in protein synthesis of a specialized repertoire of mRNAs and, together with other initiation factors, stimulates binding of mRNA and methionyl-tRNAi to the 40S ribosome. The eIF-3 complex specifically targets and initiates translation of a subset of mRNAs involved in cell proliferation. This is Eukaryotic translation initiation factor 3 subunit F from Mycosarcoma maydis (Corn smut fungus).